A 616-amino-acid chain; its full sequence is uncharacterized protein (616 aa).

Disordered regions lie at residues 166–243 (SRTY…TPEL) and 272–298 (DHEE…IEEI). Residues 184-200 (RVDESRPSENSSRHDYV) are compositionally biased toward basic and acidic residues. A compositionally biased stretch (polar residues) spans 221–237 (TRTSNVTQTQPPTNQVF). A compositionally biased stretch (acidic residues) spans 272-287 (DHEEEEGQDDDEETEI). The 75-residue stretch at 343–417 (ILIKLKFMND…VHCHISTTPY (75 aa)) folds into the Ubiquitin-like domain.

This is an uncharacterized protein from Caenorhabditis elegans.